Here is an 89-residue protein sequence, read N- to C-terminus: Heat shock protein 30A (89 aa).

Composition is skewed to basic and acidic residues over residues 1-11 (MRNNVERRMQR) and 19-39 (LSKDTEMRRITDQNRQSRESE). The disordered stretch occupies residues 1-55 (MRNNVERRMQRVNEACRLLSKDTEMRRITDQNRQSRESEGTSPNSGKDGKDHFEL). One can recognise a sHSP domain in the interval 35–89 (SRESEGTSPNSGKDGKDHFELTLNVRDFSPHELTVKTQGRRVIVTGKHERKSDTE).

The protein belongs to the small heat shock protein (HSP20) family.

The protein is Heat shock protein 30A (hsp30a) of Xenopus laevis (African clawed frog).